Reading from the N-terminus, the 137-residue chain is ATP synthase epsilon chain, chloroplastic (137 aa).

Belongs to the ATPase epsilon chain family. F-type ATPases have 2 components, CF(1) - the catalytic core - and CF(0) - the membrane proton channel. CF(1) has five subunits: alpha(3), beta(3), gamma(1), delta(1), epsilon(1). CF(0) has three main subunits: a, b and c.

The protein resides in the plastid. Its subcellular location is the chloroplast thylakoid membrane. In terms of biological role, produces ATP from ADP in the presence of a proton gradient across the membrane. The protein is ATP synthase epsilon chain, chloroplastic of Medicago sativa (Alfalfa).